The sequence spans 216 residues: MSEKPSLSIMHPWHGPILTQDNYESLCCYIEITPQDSVKFELDKATGLLKVDRPQKFSNFCPCLYGLLPRTYCGELSGKYSGEQSLKENIQGDDDPLDICVLTEKNITHGNILLQARPIGGLRIIDSGEADDKIIAVLEDDLVFSEIQDISDCPCTVLDMIQHYFLTYKASPEHLIHGKPAKIEIVGIYGKKEAQKVIELAHQDYLNKFCREKTTI.

Positions 39, 53, and 65 each coordinate substrate. 3 residues coordinate Mg(2+): Asp93, Asp98, and Asp131. Tyr168 contacts substrate.

It belongs to the PPase family. As to quaternary structure, homohexamer. It depends on Mg(2+) as a cofactor.

It localises to the cytoplasm. The enzyme catalyses diphosphate + H2O = 2 phosphate + H(+). Catalyzes the hydrolysis of inorganic pyrophosphate (PPi) forming two phosphate ions. This is Inorganic pyrophosphatase from Chlamydia caviae (strain ATCC VR-813 / DSM 19441 / 03DC25 / GPIC) (Chlamydophila caviae).